The following is a 206-amino-acid chain: Ras-related protein RABG3f (206 aa).

Residue 15–23 (GDSGVGKTS) coordinates GTP. The Effector region motif lies at 37–45 (YKATIGADF). GTP-binding positions include 63 to 67 (DTAGQ), 125 to 128 (NKVD), and 158 to 159 (SA). Residues Cys-204 and Cys-206 are each lipidated (S-geranylgeranyl cysteine). Cys-206 carries the cysteine methyl ester modification.

It belongs to the small GTPase superfamily. Rab family. As to quaternary structure, interacts with VPS35A.

The protein resides in the endosome membrane. Its subcellular location is the vacuole membrane. It is found in the prevacuolar compartment membrane. With respect to regulation, regulated by guanine nucleotide exchange factors (GEFs) which promote the exchange of bound GDP for free GTP. Regulated by the MON1-CCZ1 complex which serves as a link between Rab5 and Rab7 protein families in PVCs and mediates PVC maturation. In terms of biological role, essential for trafficking from prevacuolar compartments to vacuoles. Involved in the trafficking of newly synthesized protein to vacuoles. Essential for plant growth. Participates in the recruitment of the core retromer components to the endosomal membrane by interacting with VPS35A. The chain is Ras-related protein RABG3f (RABG3F) from Arabidopsis thaliana (Mouse-ear cress).